The sequence spans 89 residues: Pyrin domain-containing protein 1 (89 aa).

In terms of domain architecture, Pyrin spans 1–89 (MGTKREAILK…EEAARLQRAA (89 aa)).

As to quaternary structure, interacts with PYCARD/ASC (via pyrin domain). In terms of processing, phosphorylated. In terms of tissue distribution, predominantly expressed in monocytes, macrophages and granulocytes.

The protein localises to the cytoplasm. Its function is as follows. Associates with PYCARD/ASC and modulates its ability to collaborate with MEFV/pyrin and NLRP3/cryopyrin in NF-kappa-B and pro-caspase-1 activation. Suppresses kinase activity of NF-kappa-B inhibitor kinase (IKK) complex, expression of NF-kappa-B inducible genes and inhibits NF-kappa-B activation by cytokines and LPS. This chain is Pyrin domain-containing protein 1, found in Homo sapiens (Human).